Here is a 190-residue protein sequence, read N- to C-terminus: Signal peptidase I W (190 aa).

Residues 4–24 (ISNILYVIIFTLIIVLTLVVI) form a helical membrane-spanning segment. Residue serine 45 is part of the active site. The chain crosses the membrane as a helical span at residues 143-163 (PIGTAVLLIVPGVMLLVYAFV).

This sequence belongs to the peptidase S26B family.

The protein resides in the cell membrane. It catalyses the reaction Cleavage of hydrophobic, N-terminal signal or leader sequences from secreted and periplasmic proteins.. Its function is as follows. Required for the cleavage of the signal sequence of TasA and TapA, which are involved in biofilm formation. The protein is Signal peptidase I W of Bacillus subtilis (strain 168).